Consider the following 369-residue polypeptide: tRNA/tmRNA (uracil-C(5))-methyltransferase (369 aa).

S-adenosyl-L-methionine contacts are provided by glutamine 190, tyrosine 218, asparagine 223, glutamate 239, and aspartate 301. The active-site Nucleophile is cysteine 326. Residue glutamate 360 is the Proton acceptor of the active site.

This sequence belongs to the class I-like SAM-binding methyltransferase superfamily. RNA M5U methyltransferase family. TrmA subfamily.

It carries out the reaction uridine(54) in tRNA + S-adenosyl-L-methionine = 5-methyluridine(54) in tRNA + S-adenosyl-L-homocysteine + H(+). It catalyses the reaction uridine(341) in tmRNA + S-adenosyl-L-methionine = 5-methyluridine(341) in tmRNA + S-adenosyl-L-homocysteine + H(+). In terms of biological role, dual-specificity methyltransferase that catalyzes the formation of 5-methyluridine at position 54 (m5U54) in all tRNAs, and that of position 341 (m5U341) in tmRNA (transfer-mRNA). This Vibrio parahaemolyticus serotype O3:K6 (strain RIMD 2210633) protein is tRNA/tmRNA (uracil-C(5))-methyltransferase.